The sequence spans 474 residues: Aspartate ammonia-lyase (474 aa).

L-aspartate is bound by residues Thr105, Ser144, Thr145, Asn146, and Thr191. Positions 322–331 (GSSIMPGKVN) are SS loop. Ser323 acts as the Proton acceptor in catalysis. Ser324 and Lys329 together coordinate L-aspartate.

Belongs to the class-II fumarase/aspartase family. Aspartase subfamily. As to quaternary structure, homotetramer.

It catalyses the reaction L-aspartate = fumarate + NH4(+). The enzyme catalyses L-phenylalanine = (E)-cinnamate + NH4(+). Does not require any divalent metal ion for activation of catalysis, but the activity is slightly increased in the presence of Mg(2+), Mn(2+), Ca(2+) or Co(2+). Catalyzes the reversible conversion of L-aspartate to fumarate and ammonia. Can also utilize L-phenylalanine to form cinnamic acid. Exhibits the highest specific activity towards L-phenylalanine, but catalytic efficiency is 3-fold higher with L-aspartate. In Pseudomonas aeruginosa (strain ATCC 15692 / DSM 22644 / CIP 104116 / JCM 14847 / LMG 12228 / 1C / PRS 101 / PAO1), this protein is Aspartate ammonia-lyase.